The primary structure comprises 214 residues: Ribosomal RNA small subunit methyltransferase G (214 aa).

S-adenosyl-L-methionine contacts are provided by residues Gly-78, Leu-83, 129-130 (AE), and Arg-144.

It belongs to the methyltransferase superfamily. RNA methyltransferase RsmG family.

The protein localises to the cytoplasm. The enzyme catalyses guanosine(527) in 16S rRNA + S-adenosyl-L-methionine = N(7)-methylguanosine(527) in 16S rRNA + S-adenosyl-L-homocysteine. Its function is as follows. Specifically methylates the N7 position of guanine in position 527 of 16S rRNA. In Marinobacter nauticus (strain ATCC 700491 / DSM 11845 / VT8) (Marinobacter aquaeolei), this protein is Ribosomal RNA small subunit methyltransferase G.